The primary structure comprises 505 residues: RNA-splicing ligase RtcB homolog (505 aa).

Positions 119, 122, 227, 259, and 353 each coordinate Mn(2+). 226–230 is a GMP binding site; the sequence is NHYAE. Residues 353–354, 402–405, S409, 428–431, and K504 contribute to the GMP site; these read HN, GGTM, and HGAG. H428 acts as the GMP-histidine intermediate in catalysis.

This sequence belongs to the RtcB family. As to quaternary structure, catalytic component of the tRNA-splicing ligase complex. Mn(2+) is required as a cofactor.

Its subcellular location is the nucleus. The protein resides in the cytoplasm. The enzyme catalyses a 3'-end 3'-phospho-ribonucleotide-RNA + a 5'-end dephospho-ribonucleoside-RNA + GTP = a ribonucleotidyl-ribonucleotide-RNA + GMP + diphosphate. It carries out the reaction a 3'-end 2',3'-cyclophospho-ribonucleotide-RNA + a 5'-end dephospho-ribonucleoside-RNA + GTP + H2O = a ribonucleotidyl-ribonucleotide-RNA + GMP + diphosphate + H(+). In terms of biological role, catalytic subunit of the tRNA-splicing ligase complex that acts by directly joining spliced tRNA halves to mature-sized tRNAs by incorporating the precursor-derived splice junction phosphate into the mature tRNA as a canonical 3',5'-phosphodiester. May act as an RNA ligase with broad substrate specificity, and may function toward other RNAs. This is RNA-splicing ligase RtcB homolog from Danio rerio (Zebrafish).